The following is a 231-amino-acid chain: UPF0758 protein pc1765 (231 aa).

Positions 107 to 229 (LIEHSSHAYQ…YVSFKDQNLL (123 aa)) constitute an MPN domain. Residues His-178, His-180, and Asp-191 each contribute to the Zn(2+) site. Residues 178-191 (HNHPSGDPMPSNQD) carry the JAMM motif motif.

It belongs to the UPF0758 family.

The protein is UPF0758 protein pc1765 of Protochlamydia amoebophila (strain UWE25).